Reading from the N-terminus, the 742-residue chain is Vesicle-fusing ATPase (742 aa).

Residues Asn499–Cys504 and Ser539–Leu546 each bind ATP. Thr544 provides a ligand contact to Mg(2+).

The protein belongs to the AAA ATPase family. In terms of assembly, homohexamer. Binds to SNARE-SNAP complexes to form 20S particles. Requires Mg(2+) as cofactor.

It localises to the cytoplasm. The catalysed reaction is ATP + H2O = ADP + phosphate + H(+). Functionally, required for vesicle-mediated transport. Catalyzes the fusion of transport vesicles within the Golgi cisternae. Is also required for transport from the endoplasmic reticulum to the Golgi stack. Seems to function as a fusion protein required for the delivery of cargo proteins to all compartments of the Golgi stack independent of vesicle origin. Required for maintaining the normal morphology of the Golgi apparatus. The chain is Vesicle-fusing ATPase from Arabidopsis thaliana (Mouse-ear cress).